The primary structure comprises 157 residues: 17.6 kDa class I heat shock protein 3 (157 aa).

The sHSP domain maps to 43 to 157 (DVAAFTNAKV…PEVKSIDISG (115 aa)).

The protein belongs to the small heat shock protein (HSP20) family. As to quaternary structure, may form oligomeric structures.

It localises to the cytoplasm. The protein is 17.6 kDa class I heat shock protein 3 (HSP17.6C) of Arabidopsis thaliana (Mouse-ear cress).